The following is a 304-amino-acid chain: HPr kinase/phosphorylase (304 aa).

Active-site residues include His-136 and Lys-157. ATP is bound at residue 151 to 158 (GESGIGKS). Residue Ser-158 coordinates Mg(2+). Asp-175 functions as the Proton acceptor; for phosphorylation activity. Proton donor; for dephosphorylation activity in the catalytic mechanism. The interval 198 to 207 (LEVRGIGIID) is important for the catalytic mechanism of both phosphorylation and dephosphorylation. Glu-199 contributes to the Mg(2+) binding site. The active site involves Arg-240. The interval 261–266 (PVRPGR) is important for the catalytic mechanism of dephosphorylation.

The protein belongs to the HPrK/P family. In terms of assembly, homohexamer. The cofactor is Mg(2+).

The catalysed reaction is [HPr protein]-L-serine + ATP = [HPr protein]-O-phospho-L-serine + ADP + H(+). The enzyme catalyses [HPr protein]-O-phospho-L-serine + phosphate + H(+) = [HPr protein]-L-serine + diphosphate. In terms of biological role, catalyzes the ATP- as well as the pyrophosphate-dependent phosphorylation of a specific serine residue in HPr, a phosphocarrier protein of the phosphoenolpyruvate-dependent sugar phosphotransferase system (PTS). HprK/P also catalyzes the pyrophosphate-producing, inorganic phosphate-dependent dephosphorylation (phosphorolysis) of seryl-phosphorylated HPr (P-Ser-HPr). The two antagonistic activities of HprK/P are regulated by several intracellular metabolites, which change their concentration in response to the absence or presence of rapidly metabolisable carbon sources (glucose, fructose, etc.) in the growth medium. Therefore, by controlling the phosphorylation state of HPr, HPrK/P is a sensor enzyme that plays a major role in the regulation of carbon metabolism and sugar transport: it mediates carbon catabolite repression (CCR), and regulates PTS-catalyzed carbohydrate uptake and inducer exclusion. The sequence is that of HPr kinase/phosphorylase from Clostridium botulinum (strain Alaska E43 / Type E3).